A 237-amino-acid chain; its full sequence is Opacity protein opA57 (237 aa).

A signal peptide is located at residue A1.

This sequence belongs to the opacity porin family.

The protein resides in the cell outer membrane. Implicated in a number of adherence functions. OPA proteins are implicated in pathogenesis and are subject to phase variation. This chain is Opacity protein opA57 (opaK), found in Neisseria gonorrhoeae.